The primary structure comprises 320 residues: tRNA dimethylallyltransferase (320 aa).

17 to 24 lines the ATP pocket; that stretch reads GPTASGKT. 19 to 24 is a substrate binding site; it reads TASGKT. Interaction with substrate tRNA regions lie at residues 42–45, 166–170, and 249–254; these read DSAL, QRIQR, and RCVGYR.

Belongs to the IPP transferase family. Monomer. Mg(2+) serves as cofactor.

It catalyses the reaction adenosine(37) in tRNA + dimethylallyl diphosphate = N(6)-dimethylallyladenosine(37) in tRNA + diphosphate. Its function is as follows. Catalyzes the transfer of a dimethylallyl group onto the adenine at position 37 in tRNAs that read codons beginning with uridine, leading to the formation of N6-(dimethylallyl)adenosine (i(6)A). This is tRNA dimethylallyltransferase from Herminiimonas arsenicoxydans.